Consider the following 334-residue polypeptide: ADP-L-glycero-D-manno-heptose-6-epimerase (334 aa).

Residues 11–12 (FI), 32–33 (DN), Lys39, Lys54, 77–81 (QGACS), and Asn94 each bind NADP(+). Tyr141 functions as the Proton acceptor in the catalytic mechanism. NADP(+) is bound at residue Lys145. A substrate-binding site is contributed by Asn171. NADP(+) is bound by residues Val172 and Lys180. Lys180 acts as the Proton acceptor in catalysis. Substrate contacts are provided by residues Arg182, His189, 203 to 206 (FGSN), Arg216, and Tyr295.

The protein belongs to the NAD(P)-dependent epimerase/dehydratase family. HldD subfamily. As to quaternary structure, homopentamer. It depends on NADP(+) as a cofactor.

It carries out the reaction ADP-D-glycero-beta-D-manno-heptose = ADP-L-glycero-beta-D-manno-heptose. It functions in the pathway nucleotide-sugar biosynthesis; ADP-L-glycero-beta-D-manno-heptose biosynthesis; ADP-L-glycero-beta-D-manno-heptose from D-glycero-beta-D-manno-heptose 7-phosphate: step 4/4. Its pathway is bacterial outer membrane biogenesis; LOS core biosynthesis. In terms of biological role, catalyzes the interconversion between ADP-D-glycero-beta-D-manno-heptose and ADP-L-glycero-beta-D-manno-heptose via an epimerization at carbon 6 of the heptose. The polypeptide is ADP-L-glycero-D-manno-heptose-6-epimerase (Neisseria gonorrhoeae).